Consider the following 414-residue polypeptide: tRNA (guanine-N(7)-)-methyltransferase non-catalytic subunit WDR4 (414 aa).

A2 bears the N-acetylalanine mark. 4 WD repeats span residues 60 to 99 (QGSD…CLSV), 101 to 140 (TVVR…GGGR), 144 to 184 (GHLS…IESF), and 187 to 227 (GHTE…ELHC). Residues 377 to 414 (EERLQQQLEKKRRQAPPPGPNGPTKKMRAGELAQGCSS) form a disordered region.

The protein belongs to the WD repeat TRM82 family. In terms of assembly, non-catalytic component of the METTL1-WDR4 complex, composed of METTL1 and WDR4. Interacts with FEN1; the interaction is direct.

It is found in the nucleus. The protein resides in the chromosome. It participates in tRNA modification; N(7)-methylguanine-tRNA biosynthesis. Non-catalytic component of the METTL1-WDR4 methyltransferase complex required for the formation of N(7)-methylguanine in a subset of RNA species, such as tRNAs, mRNAs and microRNAs (miRNAs). In the METTL1-WDR4 methyltransferase complex, WDR4 acts as a scaffold for tRNA-binding. Required for the formation of N(7)-methylguanine at position 46 (m7G46) in a large subset of tRNAs that contain the 5'-RAGGU-3' motif within the variable loop. M7G46 interacts with C13-G22 in the D-loop to stabilize tRNA tertiary structure and protect tRNAs from decay. Also required for the formation of N(7)-methylguanine at internal sites in a subset of mRNAs. Also required for methylation of a specific subset of miRNAs, such as let-7. Independently of METTL1, also plays a role in genome stability: localizes at the DNA replication site and regulates endonucleolytic activities of FEN1. This is tRNA (guanine-N(7)-)-methyltransferase non-catalytic subunit WDR4 from Bos taurus (Bovine).